Here is a 514-residue protein sequence, read N- to C-terminus: Glutathione-binding protein GsiB (514 aa).

Positions 1-26 are cleaved as a signal peptide; that stretch reads MARAVHRSGLVALGIATALMASCAFA.

The protein belongs to the bacterial solute-binding protein 5 family. In terms of assembly, the complex is composed of two ATP-binding proteins (GsiA), two transmembrane proteins (GsiC and GsiD) and a solute-binding protein (GsiB).

Its subcellular location is the periplasm. Functionally, part of the ABC transporter complex GsiABCD involved in glutathione import. Binds glutathione. This Shigella flexneri serotype 5b (strain 8401) protein is Glutathione-binding protein GsiB.